Consider the following 199-residue polypeptide: Imidazoleglycerol-phosphate dehydratase (199 aa).

It belongs to the imidazoleglycerol-phosphate dehydratase family.

It localises to the cytoplasm. The catalysed reaction is D-erythro-1-(imidazol-4-yl)glycerol 3-phosphate = 3-(imidazol-4-yl)-2-oxopropyl phosphate + H2O. It participates in amino-acid biosynthesis; L-histidine biosynthesis; L-histidine from 5-phospho-alpha-D-ribose 1-diphosphate: step 6/9. The sequence is that of Imidazoleglycerol-phosphate dehydratase from Mesorhizobium japonicum (strain LMG 29417 / CECT 9101 / MAFF 303099) (Mesorhizobium loti (strain MAFF 303099)).